Consider the following 251-residue polypeptide: HTH-type transcriptional regulator UlaR (251 aa).

In terms of domain architecture, HTH deoR-type spans 3–58; that stretch reads EAQRHQILLEMLAQLGFVTVEKVVERLGISPATARRDINKLDERGKLKKVRNGAEA. The segment at residues 20–39 is a DNA-binding region (H-T-H motif); sequence VTVEKVVERLGISPATARRD.

It is found in the cytoplasm. Its function is as follows. Represses ulaG and the ulaABCDEF operon. This chain is HTH-type transcriptional regulator UlaR, found in Shigella sonnei (strain Ss046).